Reading from the N-terminus, the 311-residue chain is Mediator of RNA polymerase II transcription subunit 27 (311 aa).

Ser132 carries the phosphoserine modification. Lys134 carries the N6-methyllysine modification.

Belongs to the Mediator complex subunit 27 family. In terms of assembly, component of the Mediator complex, which is composed of MED1, MED4, MED6, MED7, MED8, MED9, MED10, MED11, MED12, MED13, MED13L, MED14, MED15, MED16, MED17, MED18, MED19, MED20, MED21, MED22, MED23, MED24, MED25, MED26, MED27, MED29, MED30, MED31, CCNC, CDK8 and CDC2L6/CDK11. The MED12, MED13, CCNC and CDK8 subunits form a distinct module termed the CDK8 module. Mediator containing the CDK8 module is less active than Mediator lacking this module in supporting transcriptional activation. Individual preparations of the Mediator complex lacking one or more distinct subunits have been variously termed ARC, CRSP, DRIP, PC2, SMCC and TRAP.

Its subcellular location is the nucleus. Component of the Mediator complex, a coactivator involved in the regulated transcription of nearly all RNA polymerase II-dependent genes. Mediator functions as a bridge to convey information from gene-specific regulatory proteins to the basal RNA polymerase II transcription machinery. Mediator is recruited to promoters by direct interactions with regulatory proteins and serves as a scaffold for the assembly of a functional preinitiation complex with RNA polymerase II and the general transcription factors. The protein is Mediator of RNA polymerase II transcription subunit 27 (Med27) of Mus musculus (Mouse).